Here is a 440-residue protein sequence, read N- to C-terminus: 3-phosphoshikimate 1-carboxyvinyltransferase (440 aa).

Positions 19, 20, and 24 each coordinate 3-phosphoshikimate. Lys19 is a binding site for phosphoenolpyruvate. Gly92 and Arg121 together coordinate phosphoenolpyruvate. The 3-phosphoshikimate site is built by Ser166, Gln168, Asp315, and Lys342. Gln168 contributes to the phosphoenolpyruvate binding site. Catalysis depends on Asp315, which acts as the Proton acceptor. Phosphoenolpyruvate is bound by residues Arg346 and Arg399.

It belongs to the EPSP synthase family. In terms of assembly, monomer.

Its subcellular location is the cytoplasm. It catalyses the reaction 3-phosphoshikimate + phosphoenolpyruvate = 5-O-(1-carboxyvinyl)-3-phosphoshikimate + phosphate. The protein operates within metabolic intermediate biosynthesis; chorismate biosynthesis; chorismate from D-erythrose 4-phosphate and phosphoenolpyruvate: step 6/7. In terms of biological role, catalyzes the transfer of the enolpyruvyl moiety of phosphoenolpyruvate (PEP) to the 5-hydroxyl of shikimate-3-phosphate (S3P) to produce enolpyruvyl shikimate-3-phosphate and inorganic phosphate. This Leptospira interrogans serogroup Icterohaemorrhagiae serovar copenhageni (strain Fiocruz L1-130) protein is 3-phosphoshikimate 1-carboxyvinyltransferase.